A 262-amino-acid polypeptide reads, in one-letter code: Ribosomal RNA small subunit methyltransferase A (262 aa).

S-adenosyl-L-methionine contacts are provided by isoleucine 18, glycine 43, glutamate 65, aspartate 91, and asparagine 110.

It belongs to the class I-like SAM-binding methyltransferase superfamily. rRNA adenine N(6)-methyltransferase family. RsmA subfamily.

The protein localises to the cytoplasm. The catalysed reaction is adenosine(1518)/adenosine(1519) in 16S rRNA + 4 S-adenosyl-L-methionine = N(6)-dimethyladenosine(1518)/N(6)-dimethyladenosine(1519) in 16S rRNA + 4 S-adenosyl-L-homocysteine + 4 H(+). Its function is as follows. Specifically dimethylates two adjacent adenosines (A1518 and A1519) in the loop of a conserved hairpin near the 3'-end of 16S rRNA in the 30S particle. May play a critical role in biogenesis of 30S subunits. The sequence is that of Ribosomal RNA small subunit methyltransferase A from Ehrlichia canis (strain Jake).